Reading from the N-terminus, the 1225-residue chain is DNA-directed RNA polymerase subunit beta' (1225 aa).

Zn(2+) contacts are provided by cysteine 60, cysteine 62, cysteine 75, and cysteine 78. 3 residues coordinate Mg(2+): aspartate 450, aspartate 452, and aspartate 454. Positions 818, 892, 899, and 902 each coordinate Zn(2+).

Belongs to the RNA polymerase beta' chain family. In terms of assembly, the RNAP catalytic core consists of 2 alpha, 1 beta, 1 beta' and 1 omega subunit. When a sigma factor is associated with the core the holoenzyme is formed, which can initiate transcription. Mg(2+) serves as cofactor. The cofactor is Zn(2+).

The enzyme catalyses RNA(n) + a ribonucleoside 5'-triphosphate = RNA(n+1) + diphosphate. In terms of biological role, DNA-dependent RNA polymerase catalyzes the transcription of DNA into RNA using the four ribonucleoside triphosphates as substrates. This chain is DNA-directed RNA polymerase subunit beta', found in Streptococcus pneumoniae (strain P1031).